Consider the following 611-residue polypeptide: MPKLRSATSTQGRNMAGARALWRATGMKENDFGKPIIAVVNSFTQFVPGHVHLKDMGQLVATEIEKFGGVAKEFNTIAVDDGIAMGHGGMLYSLPSRDLIADSVEYMVNAHCADAMVCISNCDKITPGMLMAALRLNIPTVFVSGGPMEAGKTKLSDQIIKLDLVDAMIQGANPNVSDDVSEQIERSACPTCGSCSGMFTANSMNCLTEALGLSLPGNGSCLATHADRKQLFLAAGKQIVELCKRYYEQDDTSVLPRSIATKEAFDNAMSLDIAMGGSTNTVLHLLAAAQEAEVNFTMADIDRLSRVVPCLSKVAPNTQKYHMEDVHRAGGIMAILGELDRAGLLNSQTRTILGMSIGEQIAKYDIKLTQDKAIHKFFRAGPAGIRTTQAFLQDCRWDTVDDDRENGCIRSKEFAYSQDGGLAMLSGNIALDGCIVKTAGVDESILKFSGKAIVFESQEDAVSGILGGKVQAGHVVVIRYEGPKGGPGMQEMLYPTSYLKSMGLGKACALLTDGRFSGGTSGLSIGHCSPEAAAGGLIGVVKDGDIIEIDIPNRRIELMVSEEELAERRAEQDKLGWKPANRQREVSFALKVYGYFATSADKGAVRDKTKI.

A Mg(2+)-binding site is contributed by Asp-81. Cys-122 is a [2Fe-2S] cluster binding site. Asp-123 and Lys-124 together coordinate Mg(2+). At Lys-124 the chain carries N6-carboxylysine. Cys-195 contributes to the [2Fe-2S] cluster binding site. Mg(2+) is bound at residue Glu-491. The Proton acceptor role is filled by Ser-517.

Belongs to the IlvD/Edd family. Homodimer. It depends on [2Fe-2S] cluster as a cofactor. The cofactor is Mg(2+).

It carries out the reaction (2R)-2,3-dihydroxy-3-methylbutanoate = 3-methyl-2-oxobutanoate + H2O. The catalysed reaction is (2R,3R)-2,3-dihydroxy-3-methylpentanoate = (S)-3-methyl-2-oxopentanoate + H2O. It functions in the pathway amino-acid biosynthesis; L-isoleucine biosynthesis; L-isoleucine from 2-oxobutanoate: step 3/4. It participates in amino-acid biosynthesis; L-valine biosynthesis; L-valine from pyruvate: step 3/4. In terms of biological role, functions in the biosynthesis of branched-chain amino acids. Catalyzes the dehydration of (2R,3R)-2,3-dihydroxy-3-methylpentanoate (2,3-dihydroxy-3-methylvalerate) into 2-oxo-3-methylpentanoate (2-oxo-3-methylvalerate) and of (2R)-2,3-dihydroxy-3-methylbutanoate (2,3-dihydroxyisovalerate) into 2-oxo-3-methylbutanoate (2-oxoisovalerate), the penultimate precursor to L-isoleucine and L-valine, respectively. The chain is Dihydroxy-acid dehydratase from Histophilus somni (strain 129Pt) (Haemophilus somnus).